Here is a 419-residue protein sequence, read N- to C-terminus: UDP-N-acetylglucosamine 1-carboxyvinyltransferase (419 aa).

22–23 provides a ligand contact to phosphoenolpyruvate; it reads KN. Residue Arg-91 participates in UDP-N-acetyl-alpha-D-glucosamine binding. The Proton donor role is filled by Cys-115. A 2-(S-cysteinyl)pyruvic acid O-phosphothioketal modification is found at Cys-115. UDP-N-acetyl-alpha-D-glucosamine-binding positions include 120–124, 160–163, Asp-305, and Val-327; these read RPVDL and KVSV.

This sequence belongs to the EPSP synthase family. MurA subfamily.

The protein localises to the cytoplasm. The enzyme catalyses phosphoenolpyruvate + UDP-N-acetyl-alpha-D-glucosamine = UDP-N-acetyl-3-O-(1-carboxyvinyl)-alpha-D-glucosamine + phosphate. It participates in cell wall biogenesis; peptidoglycan biosynthesis. Cell wall formation. Adds enolpyruvyl to UDP-N-acetylglucosamine. The polypeptide is UDP-N-acetylglucosamine 1-carboxyvinyltransferase (Salmonella schwarzengrund (strain CVM19633)).